A 356-amino-acid chain; its full sequence is Tyrosine recombinase XerS (356 aa).

Residues isoleucine 16–threonine 121 enclose the Core-binding (CB) domain. In terms of domain architecture, Tyr recombinase spans alanine 169–aspartate 354. Catalysis depends on residues arginine 210, lysine 234, histidine 306, arginine 309, and histidine 332. The active-site O-(3'-phospho-DNA)-tyrosine intermediate is the tyrosine 341.

The protein belongs to the 'phage' integrase family. XerS subfamily.

The protein localises to the cytoplasm. With respect to regulation, ftsK is required for recombination. Site-specific tyrosine recombinase, which acts by catalyzing the cutting and rejoining of the recombining DNA molecules. Essential to convert dimers of the bacterial chromosome into monomers to permit their segregation at cell division. This Streptococcus pyogenes serotype M18 (strain MGAS8232) protein is Tyrosine recombinase XerS.